Consider the following 489-residue polypeptide: MRVLHVCSELYPILKTGGLADVTAALPPALAGFGVDSRVLVPGFPAFINAIKDKQLLINIPSRFGAEEINIFLAKISNTKIDIYVIDAPSLFARPGNPYADSSNQAYADNYLRFALLGWVAARISEGLDAKWKPEIVHSHDWHAGLVPAYIKASELASGKKAVKTVFTVHNLAYQGLFPMSVFAELDLPGIFLSMNGLEFYGQVSFMKAGLYFADKITTVSPTYAKEIQIYEQGCGLEGLLADRHNDLYGVLNGVDPQIWNPKKDSLIATNYSSTTVATGKAKCKLALQQMMGLAEKEDALLFGIVTRLTEQKGLNLLIEAIGEITSRGGQIVLLGSGDKALEEVFLAAAKKYSKSIAVQIGYDEEQAHRIIAGSDVIMVPSRFEPCGLTQLYGLTYGTLPLVHKVGGLADTVIDSSLENLADGTATGFVFDEFSVESLTLVIRRAFALYNRKTDWKKVRKTAMQQQVTWDSSAEKIYQIYKNLVRENN.

Lysine 15 lines the ADP-alpha-D-glucose pocket.

Belongs to the glycosyltransferase 1 family. Bacterial/plant glycogen synthase subfamily.

It carries out the reaction [(1-&gt;4)-alpha-D-glucosyl](n) + ADP-alpha-D-glucose = [(1-&gt;4)-alpha-D-glucosyl](n+1) + ADP + H(+). The protein operates within glycan biosynthesis; glycogen biosynthesis. In terms of biological role, synthesizes alpha-1,4-glucan chains using ADP-glucose. The sequence is that of Glycogen synthase from Francisella tularensis subsp. mediasiatica (strain FSC147).